Consider the following 325-residue polypeptide: DNA-directed RNA polymerase subunit alpha (325 aa).

The tract at residues 1–231 is alpha N-terminal domain (alpha-NTD); it reads MQTSLLKPKI…DQLSVFAALE (231 aa). Positions 246–325 are alpha C-terminal domain (alpha-CTD); it reads IDPILLRPVD…ENWPPAGLDK (80 aa).

Belongs to the RNA polymerase alpha chain family. In terms of assembly, homodimer. The RNAP catalytic core consists of 2 alpha, 1 beta, 1 beta' and 1 omega subunit. When a sigma factor is associated with the core the holoenzyme is formed, which can initiate transcription.

It carries out the reaction RNA(n) + a ribonucleoside 5'-triphosphate = RNA(n+1) + diphosphate. Functionally, DNA-dependent RNA polymerase catalyzes the transcription of DNA into RNA using the four ribonucleoside triphosphates as substrates. In Burkholderia thailandensis (strain ATCC 700388 / DSM 13276 / CCUG 48851 / CIP 106301 / E264), this protein is DNA-directed RNA polymerase subunit alpha.